The sequence spans 997 residues: Disease resistance protein RML1A (997 aa).

One can recognise a TIR domain in the interval 12–176 (WRYRVFTSFH…KIARDVSEKL (165 aa)). Glutamate 87 is an active-site residue. Residues 191-447 (EAHLRKIQSL…HIAIFFNYED (257 aa)) enclose the NB-ARC domain. LRR repeat units lie at residues 194–218 (LRKI…GPAG), 534–557 (TSGI…RFLS), 600–623 (AENL…TQLL), 624–647 (TKLK…SNAT), 649–670 (LEML…IKNL), 671–693 (HKLD…NINL), 694–714 (ASLE…PAFS), 715–737 (TKIK…ITHC), 758–781 (PSSL…CIKD), and 783–808 (QRLD…SLRL).

It catalyses the reaction NAD(+) + H2O = ADP-D-ribose + nicotinamide + H(+). Its function is as follows. TIR-NB-LRR receptor-like protein that confers resistance to the pathogen Leptosphaeria maculans (blackleg disease). The chain is Disease resistance protein RML1A from Arabidopsis thaliana (Mouse-ear cress).